The primary structure comprises 338 residues: Fructose-1,6-bisphosphatase class 1 (338 aa).

Mg(2+) is bound by residues Glu-92, Asp-115, Leu-117, and Asp-118. Substrate is bound by residues 118–121 (DGSS), Asn-211, Tyr-244, 262–264 (YLY), and Lys-274. Glu-280 is a binding site for Mg(2+).

This sequence belongs to the FBPase class 1 family. Homotetramer. The cofactor is Mg(2+).

The protein resides in the cytoplasm. The enzyme catalyses beta-D-fructose 1,6-bisphosphate + H2O = beta-D-fructose 6-phosphate + phosphate. Its pathway is carbohydrate biosynthesis; gluconeogenesis. The polypeptide is Fructose-1,6-bisphosphatase class 1 (Vibrio vulnificus (strain YJ016)).